Consider the following 522-residue polypeptide: Light-independent protochlorophyllide reductase subunit B (522 aa).

Residue D36 coordinates [4Fe-4S] cluster. The Proton donor role is filled by D274. 409–410 (GL) contacts substrate. The segment at 426-464 (DEAGPSHHGGKAVPASAPRAEATADEGSTPEEAVPPVAA) is disordered. The span at 455–464 (PEEAVPPVAA) shows a compositional bias: low complexity.

This sequence belongs to the ChlB/BchB/BchZ family. Protochlorophyllide reductase is composed of three subunits; BchL, BchN and BchB. Forms a heterotetramer of two BchB and two BchN subunits. The cofactor is [4Fe-4S] cluster.

It catalyses the reaction chlorophyllide a + oxidized 2[4Fe-4S]-[ferredoxin] + 2 ADP + 2 phosphate = protochlorophyllide a + reduced 2[4Fe-4S]-[ferredoxin] + 2 ATP + 2 H2O. It functions in the pathway porphyrin-containing compound metabolism; bacteriochlorophyll biosynthesis (light-independent). Its function is as follows. Component of the dark-operative protochlorophyllide reductase (DPOR) that uses Mg-ATP and reduced ferredoxin to reduce ring D of protochlorophyllide (Pchlide) to form chlorophyllide a (Chlide). This reaction is light-independent. The NB-protein (BchN-BchB) is the catalytic component of the complex. In Cereibacter sphaeroides (strain ATCC 17025 / ATH 2.4.3) (Rhodobacter sphaeroides), this protein is Light-independent protochlorophyllide reductase subunit B.